Reading from the N-terminus, the 92-residue chain is Small ribosomal subunit protein uS19 (92 aa).

The protein belongs to the universal ribosomal protein uS19 family.

In terms of biological role, protein S19 forms a complex with S13 that binds strongly to the 16S ribosomal RNA. The chain is Small ribosomal subunit protein uS19 from Enterococcus faecalis (strain ATCC 700802 / V583).